We begin with the raw amino-acid sequence, 359 residues long: Outer membrane protein A (359 aa).

The N-terminal stretch at 1–21 is a signal peptide; it reads MKKTAIALAVALAGFATVAQA. 8 beta stranded membrane passes run 27–37, 62–73, 77–85, 103–114, 119–127, 154–163, 168–175, and 194–202; these read TWYTGAKLGWS, QLGAGAFLGYQA, LGFELGYDW, QGVQLAAKLSYP, LDIYTRLGG, PLAAVGVEYA, WATRLDYQ, and MLSLGVSYR. 5 tandem repeats follow at residues 210-211, 212-213, 214-215, 216-217, and 218-219. The tract at residues 210-219 is 5 X 2 AA tandem repeats of A-P; it reads APAPAPAPAP. The OmpA-like domain maps to 221-351; that stretch reads VETKRFTLKS…RVEIEVKGIK (131 aa). Cysteine 322 and cysteine 336 are oxidised to a cystine.

It belongs to the outer membrane OOP (TC 1.B.6) superfamily. OmpA family. Monomer and homodimer.

It is found in the cell outer membrane. Its function is as follows. With TolR probably plays a role in maintaining the position of the peptidoglycan cell wall in the periplasm. Acts as a porin with low permeability that allows slow penetration of small solutes; an internal gate slows down solute passage. This is Outer membrane protein A from Serratia marcescens.